Reading from the N-terminus, the 28-residue chain is leu operon leader peptide (28 aa).

Involved in control of the biosynthesis of leucine. This is leu operon leader peptide (leuL) from Salmonella typhi.